The following is a 396-amino-acid chain: Pinosylvin synthase 1 (396 aa).

Position 60 to 63 (60 to 63 (KFKR)) interacts with substrate. Cysteine 170 is a catalytic residue. Substrate contacts are provided by residues leucine 273 and 311-313 (GGH).

The protein belongs to the thiolase-like superfamily. Chalcone/stilbene synthases family. As to quaternary structure, homodimer.

The protein localises to the cytoplasm. It catalyses the reaction (E)-cinnamoyl-CoA + 3 malonyl-CoA + 3 H(+) = (E)-pinosylvin + 4 CO2 + 4 CoA. The catalysed reaction is 3-phenylpropanoyl-CoA + 3 malonyl-CoA + 3 H(+) = dihydropinosylvin + 4 CO2 + 4 CoA. The protein operates within phytoalexin biosynthesis; pinosylvin biosynthesis. In terms of biological role, catalyzes the production of pinosylvin from cinnamoyl-CoA and malonyl-CoA, and dihydropinosylvin from dihydrocinnamoyl-CoA. The protein is Pinosylvin synthase 1 of Pinus strobus (Eastern white pine).